A 573-amino-acid chain; its full sequence is Myrcene synthase TPS5FN (573 aa).

Residues Arg286, Asp323, Asp327, Arg464, and Asp467 each contribute to the (2E)-geranyl diphosphate site. Residues Asp323 and Asp327 each coordinate Mg(2+). A DDXXD motif motif is present at residues 323–327 (DDIFD). Asp467, Thr471, and Glu475 together coordinate Mg(2+).

The protein belongs to the terpene synthase family. Tpsb subfamily. Requires Mg(2+) as cofactor. Mn(2+) serves as cofactor. In terms of tissue distribution, expressed in glandular trichomes two to four weeks after flowering onset.

It carries out the reaction (2E)-geranyl diphosphate = beta-myrcene + diphosphate. It catalyses the reaction (2E)-geranyl diphosphate = (1R,5R)-alpha-pinene + diphosphate. The catalysed reaction is (2E)-geranyl diphosphate = sabinene + diphosphate. The enzyme catalyses (2E)-geranyl diphosphate = (4S)-limonene + diphosphate. It carries out the reaction (2E)-geranyl diphosphate = terpinolene + diphosphate. It catalyses the reaction (2E)-geranyl diphosphate = camphene + diphosphate. The protein operates within secondary metabolite biosynthesis; terpenoid biosynthesis. Its function is as follows. Involved in monoterpene (C10) olefins biosynthesis, constituants of cannabinoids and terpenoids-rich resins. Catalyzes mainly the conversion of (2E)-geranyl diphosphate to beta-myrcene, and also produces minor products such as alpha-pinene, camphene, sabinene, limonene and terpinolene. The sequence is that of Myrcene synthase TPS5FN from Cannabis sativa (Hemp).